The sequence spans 313 residues: Ribosomal RNA small subunit methyltransferase H (313 aa).

S-adenosyl-L-methionine-binding positions include 34 to 36, D53, F80, D101, and Q108; that span reads GGH.

It belongs to the methyltransferase superfamily. RsmH family.

It localises to the cytoplasm. It catalyses the reaction cytidine(1402) in 16S rRNA + S-adenosyl-L-methionine = N(4)-methylcytidine(1402) in 16S rRNA + S-adenosyl-L-homocysteine + H(+). In terms of biological role, specifically methylates the N4 position of cytidine in position 1402 (C1402) of 16S rRNA. In Lacticaseibacillus casei (strain BL23) (Lactobacillus casei), this protein is Ribosomal RNA small subunit methyltransferase H.